Consider the following 299-residue polypeptide: B3 domain-containing transcription factor NGA2 (299 aa).

Residues 1 to 21 form a disordered region; it reads MNQEDKEKPIEEASSSMEREH. The segment at residues 23–129 is a DNA-binding region (TF-B3); sequence FDKVVTPSDV…KLYIDWRRRP (107 aa). The segment at 226–249 is disordered; the sequence is GGGGSVNSTEEESSSSGGSIPRGR.

The protein resides in the nucleus. Its function is as follows. Regulates lateral organ growth. Functionally redundant with NGA1, NGA3 and NGA4. The protein is B3 domain-containing transcription factor NGA2 (NGA2) of Arabidopsis thaliana (Mouse-ear cress).